Reading from the N-terminus, the 249-residue chain is Small ribosomal subunit protein eS6 (249 aa).

The segment covering 223–238 (LRQRDHSKKHTRKVHA) has biased composition (basic residues). The segment at 223–249 (LRQRDHSKKHTRKVHAQRAEVAAFQKK) is disordered.

It belongs to the eukaryotic ribosomal protein eS6 family. Post-translationally, ribosomal protein S6 is the major substrate of protein kinases in eukaryote ribosomes.

Functionally, component of the 40S small ribosomal subunit. Plays an important role in controlling cell growth and proliferation through the selective translation of particular classes of mRNA. This Leishmania major protein is Small ribosomal subunit protein eS6 (RPS6).